The primary structure comprises 274 residues: MSLQEDIITQLGVKPKIDAQEEIRKSIDFLKAYMKKHGFLKSYVLGISGGQDSSLAGRLAQLAIEELRHETGDNGYKFIAIRLPYGVQADEDDAQRALNFIQPDVSLAINIKPAVDGEVAALAEAGVQVSDFNKGNIKARQRMISQYAVAGENGGAVIGTDHAAENITGFFTKFGDGGADILPLYRLNKRQGKQLLAELGADKALYEKIPTADLEENKPGIADEVALGVTYNDIDDYLEGKQVSPAAQKIIENWWNKTEHKRHLPISIFDDFWK.

46–53 lines the ATP pocket; it reads GISGGQDS. Residue aspartate 52 coordinates Mg(2+). Arginine 140 is a deamido-NAD(+) binding site. Residue threonine 160 coordinates ATP. Glutamate 165 contacts Mg(2+). Lysine 173 and aspartate 180 together coordinate deamido-NAD(+). ATP is bound by residues lysine 189 and threonine 211. 260-261 is a binding site for deamido-NAD(+); that stretch reads HK.

This sequence belongs to the NAD synthetase family. In terms of assembly, homodimer.

It carries out the reaction deamido-NAD(+) + NH4(+) + ATP = AMP + diphosphate + NAD(+) + H(+). Its pathway is cofactor biosynthesis; NAD(+) biosynthesis; NAD(+) from deamido-NAD(+) (ammonia route): step 1/1. Catalyzes the ATP-dependent amidation of deamido-NAD to form NAD. Uses ammonia as a nitrogen source. In Streptococcus mutans serotype c (strain ATCC 700610 / UA159), this protein is NH(3)-dependent NAD(+) synthetase.